A 142-amino-acid polypeptide reads, in one-letter code: Hemoglobin subunit alpha-2 (142 aa).

Residues 2-142 form the Globin domain; it reads LLSADDKKHI…VSTVLTSKYR (141 aa). Histidine 59 is an O2 binding site. Histidine 88 is a heme b binding site.

The protein belongs to the globin family. As to quaternary structure, heterotetramer of two alpha chains and two beta chains. In terms of tissue distribution, red blood cells.

In terms of biological role, involved in oxygen transport from the lung to the various peripheral tissues. This chain is Hemoglobin subunit alpha-2 (hba2), found in Xenopus laevis (African clawed frog).